The sequence spans 583 residues: Multidrug transporter QDR2 (583 aa).

The interval 23–46 is disordered; it reads EKYDGPDLSEVDSEDNDKMIKTNE. Asn-60 is a glycosylation site (N-linked (GlcNAc...) asparagine). The helical transmembrane segment at 88–108 threads the bilayer; sequence AYTGLFSTMAGAIYYPVLSVI. A glycan (N-linked (GlcNAc...) asparagine) is linked at Asn-120. Helical transmembrane passes span 121–141, 148–168, 178–198, 208–228, and 238–258; these read ITVV…GGLA, PVVL…ACAQ, CLQA…IGDV, VGYI…IGAG, and IFWF…IMLP. N-linked (GlcNAc...) asparagine glycosylation occurs at Asn-267. The next 2 membrane-spanning stretches (helical) occupy residues 323–342 and 354–374; these read ILLV…QTAL and VAKI…SIVT. Asn-380 carries N-linked (GlcNAc...) asparagine glycosylation. Helical transmembrane passes span 432–452, 458–478, 493–513, and 524–544; these read HAAF…GWCI, LASV…ILTF, TATG…IGCL, and GVFT…FYLL.

The protein belongs to the major facilitator superfamily. CAR1 family.

The protein resides in the cell membrane. Multidrug resistance transporter involved in resistance to the antifungal drugs miconazole, tioconazole, clotrimazole, and ketoconazole; as well as to quinidine. Decreases the intracellular accumulation of clotrimazole in and plays a role in the extrusion of this antifungal from preloaded cells. The sequence is that of Multidrug transporter QDR2 from Candida glabrata (strain ATCC 2001 / BCRC 20586 / JCM 3761 / NBRC 0622 / NRRL Y-65 / CBS 138) (Yeast).